Here is a 689-residue protein sequence, read N- to C-terminus: Methionine--tRNA ligase (689 aa).

The 'HIGH' region motif lies at 15-25 (PYANGPIHLGH). Positions 146, 149, 159, and 162 each coordinate Zn(2+). The short motif at 332–336 (KMSKS) is the 'KMSKS' region element. An ATP-binding site is contributed by Lys-335. Residues 546–577 (KDNLQPTEAPKADKKADKKVEKKATTGDPLTD) are disordered. Positions 555–570 (PKADKKADKKVEKKAT) are enriched in basic and acidic residues. The region spanning 588–689 (DFAKLDLRIA…QGAKPGMRVK (102 aa)) is the tRNA-binding domain.

The protein belongs to the class-I aminoacyl-tRNA synthetase family. MetG type 1 subfamily. In terms of assembly, homodimer. Zn(2+) serves as cofactor.

Its subcellular location is the cytoplasm. It catalyses the reaction tRNA(Met) + L-methionine + ATP = L-methionyl-tRNA(Met) + AMP + diphosphate. Is required not only for elongation of protein synthesis but also for the initiation of all mRNA translation through initiator tRNA(fMet) aminoacylation. This Shewanella denitrificans (strain OS217 / ATCC BAA-1090 / DSM 15013) protein is Methionine--tRNA ligase.